Here is a 109-residue protein sequence, read N- to C-terminus: Small ribosomal subunit protein eS25z (109 aa).

The interval 1–36 (MAPKKDKVPPPSSKPAKSGGGKQKKKKWSKGKQKEK) is disordered. Residues 22-31 (KQKKKKWSKG) are compositionally biased toward basic residues.

Belongs to the eukaryotic ribosomal protein eS25 family.

This chain is Small ribosomal subunit protein eS25z (RPS25A), found in Arabidopsis thaliana (Mouse-ear cress).